The sequence spans 292 residues: Rhodanese-like domain-containing protein 11, chloroplastic (292 aa).

Residues 1-56 (MESLSLPVLNPLLASGSNLFRNQHSRMTSSMVSSLKSPIGGTSLSTVRRFGVGVVR) constitute a chloroplast transit peptide. Positions 101-224 (SLSNKPLLDV…AQDEDLVTEG (124 aa)) constitute a Rhodanese domain. The active-site Cysteine persulfide intermediate is the C184.

The protein localises to the plastid. It is found in the chloroplast. The polypeptide is Rhodanese-like domain-containing protein 11, chloroplastic (STR11) (Arabidopsis thaliana (Mouse-ear cress)).